The sequence spans 100 residues: MHLTSREQEKLMLFLAGELAAKRKARGVKLNYPETIAYIASHLQEAARDGMSVAEVMQYGATLLTVDDVMEGVAEMVHEVQIEATFPDGTKLVTVHNPIR.

Belongs to the urease gamma subunit family. Heterotrimer of UreA (gamma), UreB (beta) and UreC (alpha) subunits. Three heterotrimers associate to form the active enzyme.

The protein resides in the cytoplasm. It carries out the reaction urea + 2 H2O + H(+) = hydrogencarbonate + 2 NH4(+). Its pathway is nitrogen metabolism; urea degradation; CO(2) and NH(3) from urea (urease route): step 1/1. The sequence is that of Urease subunit gamma from Haemophilus influenzae (strain 86-028NP).